A 492-amino-acid polypeptide reads, in one-letter code: FAD-containing monooxygenase EthA (492 aa).

FAD contacts are provided by residues Ser15, Glu36, 44–47, Asp56, and Val104; that span reads TWDL. 54-56 contributes to the NADP(+) binding site; it reads RSD. NADP(+) is bound by residues 183–189 and 207–208; these read SGATAVT and RS.

It belongs to the FAD-binding monooxygenase family. Requires FAD as cofactor.

The protein resides in the cell membrane. It catalyses the reaction ethionamide + NADPH + O2 + H(+) = ethionamide S-oxide + NADP(+) + H2O. Monooxygenase able to convert a wide range of ketones to the corresponding esters or lactones via a Baeyer-Villiger oxidation reaction. Can act on long-chain aliphatic ketones (2-hexanone to 2-dodecanone) and on aromatic ketones (phenylacetone and benzylacetone). Is also able to catalyze enantioselective sulfoxidation of methyl-p-tolylsulfide. In vivo, likely functions as a BVMO, but the exact nature of the physiological substrate(s) remains to be established. In terms of biological role, is responsible for the activation of several thiocarbamide-containing pro-drugs, such as ethionamide (ETH), isoxyl (ISO) and thiacetazone (TAC), into reactive species. The chain is FAD-containing monooxygenase EthA (ethA) from Mycolicibacterium smegmatis (strain ATCC 700084 / mc(2)155) (Mycobacterium smegmatis).